The primary structure comprises 322 residues: Undecaprenyl-phosphate 4-deoxy-4-formamido-L-arabinose transferase (322 aa).

The Cytoplasmic segment spans residues 1–235; the sequence is MFEIHPVKKV…TCLTTTPLRM (235 aa). A helical transmembrane segment spans residues 236-256; sequence LSLLGSIIAIGGFSIAVLLVI. The Periplasmic segment spans residues 257–269; that stretch reads LRLTFGPQWAAEG. The helical transmembrane segment at 270–290 threads the bilayer; that stretch reads VFMLFAVLFTFIGAQFIGMGL. Residues 291–322 are Cytoplasmic-facing; it reads LGEYIGRIYTDVRARPRYFVQQVIRPSSKENE.

This sequence belongs to the glycosyltransferase 2 family.

It localises to the cell inner membrane. The enzyme catalyses UDP-4-deoxy-4-formamido-beta-L-arabinose + di-trans,octa-cis-undecaprenyl phosphate = 4-deoxy-4-formamido-alpha-L-arabinopyranosyl di-trans,octa-cis-undecaprenyl phosphate + UDP. Its pathway is glycolipid biosynthesis; 4-amino-4-deoxy-alpha-L-arabinose undecaprenyl phosphate biosynthesis; 4-amino-4-deoxy-alpha-L-arabinose undecaprenyl phosphate from UDP-4-deoxy-4-formamido-beta-L-arabinose and undecaprenyl phosphate: step 1/2. It participates in bacterial outer membrane biogenesis; lipopolysaccharide biosynthesis. Functionally, catalyzes the transfer of 4-deoxy-4-formamido-L-arabinose from UDP to undecaprenyl phosphate. The modified arabinose is attached to lipid A and is required for resistance to polymyxin and cationic antimicrobial peptides. The protein is Undecaprenyl-phosphate 4-deoxy-4-formamido-L-arabinose transferase of Escherichia coli O17:K52:H18 (strain UMN026 / ExPEC).